Here is a 298-residue protein sequence, read N- to C-terminus: Dioxygenase aneA (298 aa).

3 residues coordinate Fe cation: histidine 134, aspartate 136, and histidine 213.

This sequence belongs to the PhyH family. As to quaternary structure, homodimer. The cofactor is Fe cation.

The catalysed reaction is aculene D + 2-oxoglutarate + O2 = aculene C + succinate + CO2 + H2O. It catalyses the reaction aculene B + 2-oxoglutarate + O2 = aculene A + succinate + CO2 + H2O. Its pathway is secondary metabolite biosynthesis. In terms of biological role, dioxygenase; part of the gene cluster that mediates the biosynthesis of aculenes, a unique type of norsesquiterpenes that contain a nordaucane skeleton linked to an L-proline moiety and are of mixed biosynthetic origin. The pathway begins with the synthesis of dauca-4,7-diene by the terpene cyclase aneC using farnesyl pyrophosphate (FPP) as substrate. The cytochrome P450 monooxygenase aneF then performs the initial oxidation at C-12 of dauca-4,7-diene to yield asperaculane D. Asperaculane D is substrate of the cytochrome P450 monooxygenase aneD for C-10 hydroxylation to yield asperaculane E. The cytochrome P450 monooxygenase aneG then converts asperaculane E into aculene D via C-2 oxidation. The monomodular nonribosomal peptide synthase aneB adenylates L-proline and the thiohydrolase aneE transfers this activated L-proline derivative to aculenes D and C to produce respectively aculenes B and A. The dioxygenase aneA converts aculene D into aculene C, and aculene B into aculene A by introducing the 5,6-alkene moiety. Asperculanes A, B, C and F, as well as 14-prolyl asperculane C, might be shunt products of the pathway. The polypeptide is Dioxygenase aneA (Aspergillus aculeatus (strain ATCC 16872 / CBS 172.66 / WB 5094)).